The chain runs to 44 residues: Relaxin (44 aa).

Gln1 is subject to Pyrrolidone carboxylic acid. 3 cysteine pairs are disulfide-bonded: Cys3–Cys31, Cys15–Cys44, and Cys30–Cys35.

Belongs to the insulin family. In terms of assembly, heterodimer of a B chain and an A chain linked by two disulfide bonds.

The protein localises to the secreted. This chain is Relaxin, found in Carcharias taurus (Sand tiger shark).